The primary structure comprises 494 residues: Ketol-acid reductoisomerase (NADP(+)) (494 aa).

The 195-residue stretch at 14 to 208 (LDQLGRCRFM…GGHRAGCLES (195 aa)) folds into the KARI N-terminal Rossmann domain. Residues 45–48 (CGAQ), arginine 68, arginine 76, serine 78, and 108–110 (DKQ) each bind NADP(+). Residue histidine 132 is part of the active site. Glycine 158 serves as a coordination point for NADP(+). 2 consecutive KARI C-terminal knotted domains span residues 209–344 (SFVA…NYPE) and 345–487 (TDVE…MTDM). Positions 217, 221, 389, and 393 each coordinate Mg(2+). Serine 414 is a substrate binding site.

It belongs to the ketol-acid reductoisomerase family. It depends on Mg(2+) as a cofactor.

It catalyses the reaction (2R)-2,3-dihydroxy-3-methylbutanoate + NADP(+) = (2S)-2-acetolactate + NADPH + H(+). The catalysed reaction is (2R,3R)-2,3-dihydroxy-3-methylpentanoate + NADP(+) = (S)-2-ethyl-2-hydroxy-3-oxobutanoate + NADPH + H(+). It participates in amino-acid biosynthesis; L-isoleucine biosynthesis; L-isoleucine from 2-oxobutanoate: step 2/4. Its pathway is amino-acid biosynthesis; L-valine biosynthesis; L-valine from pyruvate: step 2/4. Involved in the biosynthesis of branched-chain amino acids (BCAA). Catalyzes an alkyl-migration followed by a ketol-acid reduction of (S)-2-acetolactate (S2AL) to yield (R)-2,3-dihydroxy-isovalerate. In the isomerase reaction, S2AL is rearranged via a Mg-dependent methyl migration to produce 3-hydroxy-3-methyl-2-ketobutyrate (HMKB). In the reductase reaction, this 2-ketoacid undergoes a metal-dependent reduction by NADPH to yield (R)-2,3-dihydroxy-isovalerate. In Vibrio parahaemolyticus serotype O3:K6 (strain RIMD 2210633), this protein is Ketol-acid reductoisomerase (NADP(+)).